Here is a 526-residue protein sequence, read N- to C-terminus: DDB1- and CUL4-associated factor 17 (526 aa).

A run of 2 helical transmembrane segments spans residues 200–220 (ILMR…MLEI) and 237–257 (GVLA…EYIV).

Its subcellular location is the membrane. It is found in the nucleus. It localises to the nucleolus. Its pathway is protein modification; protein ubiquitination. Functionally, may function as a substrate receptor for CUL4-DDB1 E3 ubiquitin-protein ligase complex. This chain is DDB1- and CUL4-associated factor 17 (dcaf17), found in Danio rerio (Zebrafish).